Reading from the N-terminus, the 274-residue chain is Formamidopyrimidine-DNA glycosylase (274 aa).

Proline 2 serves as the catalytic Schiff-base intermediate with DNA. Catalysis depends on glutamate 3, which acts as the Proton donor. The active-site Proton donor; for beta-elimination activity is lysine 58. The DNA site is built by histidine 92 and arginine 111. An FPG-type; degenerate zinc finger spans residues 239–273 (HVYGREGEPCERCGTIIEKIKVAQRGTHFCPLEQR). The active-site Proton donor; for delta-elimination activity is the arginine 263.

The protein belongs to the FPG family. In terms of assembly, monomer. The cofactor is Zn(2+).

It catalyses the reaction Hydrolysis of DNA containing ring-opened 7-methylguanine residues, releasing 2,6-diamino-4-hydroxy-5-(N-methyl)formamidopyrimidine.. It carries out the reaction 2'-deoxyribonucleotide-(2'-deoxyribose 5'-phosphate)-2'-deoxyribonucleotide-DNA = a 3'-end 2'-deoxyribonucleotide-(2,3-dehydro-2,3-deoxyribose 5'-phosphate)-DNA + a 5'-end 5'-phospho-2'-deoxyribonucleoside-DNA + H(+). Functionally, involved in base excision repair of DNA damaged by oxidation or by mutagenic agents. Acts as a DNA glycosylase that recognizes and removes damaged bases. Has a preference for oxidized purines, such as 7,8-dihydro-8-oxoguanine (8-oxoG). Has AP (apurinic/apyrimidinic) lyase activity and introduces nicks in the DNA strand. Cleaves the DNA backbone by beta-delta elimination to generate a single-strand break at the site of the removed base with both 3'- and 5'-phosphates. The chain is Formamidopyrimidine-DNA glycosylase from Lactiplantibacillus plantarum (strain ATCC BAA-793 / NCIMB 8826 / WCFS1) (Lactobacillus plantarum).